Reading from the N-terminus, the 227-residue chain is MSTAIVVFSGGQDSTTCLIQALTQYDHVHCITFDYGQRHNQEIEVAKKVAIELGAASHKVMDVGLLNELAVSSLTRDNIPVSHELQENGLPNSFVPGRNILFLTLAGIYAYQLGAEAVLTGVCETDFSGYPDCRDEFVKSINQSLVLGMDRQLEIKTPLMWLNKAETWALADKYGKLDYVRNHTLTCYNGVIGDGCGDCPSCDLRKNGLDAYLENKESVMADLESKL.

ATP is bound at residue 8–18 (FSGGQDSTTCL). Positions 187, 196, 199, and 202 each coordinate Zn(2+).

The protein belongs to the QueC family. The cofactor is Zn(2+).

It carries out the reaction 7-carboxy-7-deazaguanine + NH4(+) + ATP = 7-cyano-7-deazaguanine + ADP + phosphate + H2O + H(+). Its pathway is purine metabolism; 7-cyano-7-deazaguanine biosynthesis. Its function is as follows. Catalyzes the ATP-dependent conversion of 7-carboxy-7-deazaguanine (CDG) to 7-cyano-7-deazaguanine (preQ(0)). The sequence is that of 7-cyano-7-deazaguanine synthase from Aliivibrio fischeri (strain MJ11) (Vibrio fischeri).